We begin with the raw amino-acid sequence, 466 residues long: Cysteine--tRNA ligase (466 aa).

Cys-27 is a binding site for Zn(2+). Residues 29 to 39 carry the 'HIGH' region motif; it reads PTVYNFFHIGN. Zn(2+)-binding residues include Cys-207, His-232, and Glu-236. The short motif at 264–268 is the 'KMSKS' region element; the sequence is KMSKS. Residue Lys-267 coordinates ATP.

The protein belongs to the class-I aminoacyl-tRNA synthetase family. In terms of assembly, monomer. Zn(2+) serves as cofactor.

Its subcellular location is the cytoplasm. It catalyses the reaction tRNA(Cys) + L-cysteine + ATP = L-cysteinyl-tRNA(Cys) + AMP + diphosphate. The polypeptide is Cysteine--tRNA ligase (Clostridium beijerinckii (strain ATCC 51743 / NCIMB 8052) (Clostridium acetobutylicum)).